The sequence spans 326 residues: Tetraketide alpha-pyrone reductase 1 (326 aa).

Residues 8–32 (VCVT…GYEV), Lys44, and Tyr162 contribute to the NADP(+) site.

This sequence belongs to the NAD(P)-dependent epimerase/dehydratase family. Dihydroflavonol-4-reductase subfamily. Interacts with 4CLL1/ACOS5, PKSA and PKSB. In terms of tissue distribution, specifically expressed in anther tapetal cells during microspores development.

The protein resides in the cytoplasm. It localises to the nucleus. It is found in the endoplasmic reticulum. In terms of biological role, involved in the biosynthesis of hydroxylated tetraketide compounds that serve as sporopollenin precursors (the main constituents of exine). Is essential for pollen wall development. Acts on tetraketide alpha-pyrones and reduces the carbonyl function on the tetraketide alkyl chain to a secondary alcohol function. This chain is Tetraketide alpha-pyrone reductase 1 (TKPR1), found in Arabidopsis thaliana (Mouse-ear cress).